Consider the following 211-residue polypeptide: UPF0637 protein ABC2405 (211 aa).

The protein belongs to the UPF0637 family.

The chain is UPF0637 protein ABC2405 from Shouchella clausii (strain KSM-K16) (Alkalihalobacillus clausii).